We begin with the raw amino-acid sequence, 343 residues long: Biotin synthase (343 aa).

Residues 36-254 enclose the Radical SAM core domain; it reads RQVQVSTLLS…IAVARIMMPR (219 aa). Residues Cys51, Cys55, and Cys58 each contribute to the [4Fe-4S] cluster site. The [2Fe-2S] cluster site is built by Cys95, Cys126, Cys186, and Arg258.

It belongs to the radical SAM superfamily. Biotin synthase family. In terms of assembly, homodimer. [4Fe-4S] cluster serves as cofactor. [2Fe-2S] cluster is required as a cofactor.

It catalyses the reaction (4R,5S)-dethiobiotin + (sulfur carrier)-SH + 2 reduced [2Fe-2S]-[ferredoxin] + 2 S-adenosyl-L-methionine = (sulfur carrier)-H + biotin + 2 5'-deoxyadenosine + 2 L-methionine + 2 oxidized [2Fe-2S]-[ferredoxin]. It participates in cofactor biosynthesis; biotin biosynthesis; biotin from 7,8-diaminononanoate: step 2/2. Catalyzes the conversion of dethiobiotin (DTB) to biotin by the insertion of a sulfur atom into dethiobiotin via a radical-based mechanism. The polypeptide is Biotin synthase (Erwinia tasmaniensis (strain DSM 17950 / CFBP 7177 / CIP 109463 / NCPPB 4357 / Et1/99)).